Here is a 517-residue protein sequence, read N- to C-terminus: MLHMTQAKKPLMLIILDGWGYREAREGNAILAARTPNLDHLIEEYPWCFLEASGEAVGLPEGQMGNSEVGHLNIGAGRIVYQDLTRINFSIRKGDFFKNPAFLGAISNAKANDSSLHLMGLVSYGGVHSYMAHIHALIKLAQQEGVKKVYIHAFLDGRDVPPKAALKDIEELDAFCKENGNAKIATISGRYYAMDRDKRWDRTKLAYDALTMGVAPYKTPDAETAVSEAYKRGETDEFVKPTVITDSEGKPEAVIKDNDSIIFFNFRPDRARQLTWAFVNKDFENFPREKHPKVYYVCMAQYDETLDLPIAFPPEELENVLGEVLSKQGLAQLRIAETEKYAHVTFFLNGGQEKCYEGEDRCLIPSPKIATYDLKPEMSAYEVTEEVIGRIRSGKYDVIVLNFANMDMVGHTGIFEAAVKAVEAVDSCVGKIATVLKEVGGVAIITADHGNAEQMENPTTEEPHTAHTSNPVKCIYFGNDEVKGLKNGKLCDLAPTLLELLKIRKPEEMTGESLIIK.

Mn(2+) contacts are provided by Asp17 and Ser67. The active-site Phosphoserine intermediate is Ser67. Substrate-binding positions include His128, 158–159 (RD), Arg190, Arg196, 267–270 (RPDR), and Lys340. Mn(2+)-binding residues include Asp407, His411, Asp448, His449, and His467.

Belongs to the BPG-independent phosphoglycerate mutase family. Requires Mn(2+) as cofactor.

It carries out the reaction (2R)-2-phosphoglycerate = (2R)-3-phosphoglycerate. Its pathway is carbohydrate degradation; glycolysis; pyruvate from D-glyceraldehyde 3-phosphate: step 3/5. Functionally, catalyzes the interconversion of 2-phosphoglycerate and 3-phosphoglycerate. This Methanosarcina barkeri (strain Fusaro / DSM 804) protein is 2,3-bisphosphoglycerate-independent phosphoglycerate mutase 1.